A 650-amino-acid chain; its full sequence is Threonine--tRNA ligase (650 aa).

Residues 3-65 (DLVKVTLPDG…DRDARLEIVT (63 aa)) enclose the TGS domain. Residues 248–548 (DHRRLGPQLG…LTEHYAGAFP (301 aa)) form a catalytic region. The Zn(2+) site is built by C349, H400, and H525.

Belongs to the class-II aminoacyl-tRNA synthetase family. Homodimer. It depends on Zn(2+) as a cofactor.

It localises to the cytoplasm. The enzyme catalyses tRNA(Thr) + L-threonine + ATP = L-threonyl-tRNA(Thr) + AMP + diphosphate + H(+). Functionally, catalyzes the attachment of threonine to tRNA(Thr) in a two-step reaction: L-threonine is first activated by ATP to form Thr-AMP and then transferred to the acceptor end of tRNA(Thr). Also edits incorrectly charged L-seryl-tRNA(Thr). This is Threonine--tRNA ligase from Anaeromyxobacter dehalogenans (strain 2CP-C).